A 504-amino-acid polypeptide reads, in one-letter code: Arrestin-related trafficking adapter 10 (504 aa).

This sequence belongs to the ART10 family.

It is found in the cytoplasm. May regulate endocytosis by recruiting RSP5 ubiquitin ligase activity to specific plasma membrane proteins in response to extracellular stimuli. This is Arrestin-related trafficking adapter 10 (ART10) from Candida glabrata (strain ATCC 2001 / BCRC 20586 / JCM 3761 / NBRC 0622 / NRRL Y-65 / CBS 138) (Yeast).